Reading from the N-terminus, the 202-residue chain is LexA repressor (202 aa).

Positions 28–48 form a DNA-binding region, H-T-H motif; sequence RAEIAQRLGFRSPNAAEEHLK. Residues S119 and K156 each act as for autocatalytic cleavage activity in the active site.

This sequence belongs to the peptidase S24 family. Homodimer.

It carries out the reaction Hydrolysis of Ala-|-Gly bond in repressor LexA.. Functionally, represses a number of genes involved in the response to DNA damage (SOS response), including recA and lexA. Binds to the 16 bp palindromic sequence 5'-CTGTATATATATACAG-3'. In the presence of single-stranded DNA, RecA interacts with LexA causing an autocatalytic cleavage which disrupts the DNA-binding part of LexA, leading to derepression of the SOS regulon and eventually DNA repair. This is LexA repressor from Salmonella agona (strain SL483).